The following is a 259-amino-acid chain: Small ribosomal subunit protein uS2 (259 aa).

Positions 228 to 259 are disordered; that stretch reads VSFGSEEAEENNQKEDNEEIFEIEDVDESEEM. Residues 233 to 259 are compositionally biased toward acidic residues; it reads EEAEENNQKEDNEEIFEIEDVDESEEM.

The protein belongs to the universal ribosomal protein uS2 family.

The polypeptide is Small ribosomal subunit protein uS2 (Thermosipho africanus (strain TCF52B)).